Here is a 591-residue protein sequence, read N- to C-terminus: L-gulonolactone oxidase 2 (591 aa).

Residues 1-27 (MAFTFPPSYRTLVGLYYIFTLMHTAVS) form the signal peptide. The region spanning 56–238 (STCRAANVAY…SQVTFELQPM (183 aa)) is the FAD-binding PCMH-type domain.

It belongs to the oxygen-dependent FAD-linked oxidoreductase family. FAD is required as a cofactor.

The catalysed reaction is L-gulono-1,4-lactone + O2 = L-ascorbate + H2O2 + H(+). It participates in cofactor biosynthesis; L-ascorbate biosynthesis. Functionally, catalyzes the oxidation of L-gulono-1,4-lactone to ascorbic acid. L-gulono-1,4-lactone is oxidized to hydrogen peroxide and L-xylo-hexulonolactone which spontaneously isomerizes to L-ascorbate. The protein is L-gulonolactone oxidase 2 of Arabidopsis thaliana (Mouse-ear cress).